We begin with the raw amino-acid sequence, 95 residues long: Oxytetracycline polyketide synthase acyl carrier protein (95 aa).

The Carrier domain maps to 3–81; sequence LLTLSDLLTL…ALIEMTNASL (79 aa). An O-(pantetheine 4'-phosphoryl)serine modification is found at serine 41.

4'-phosphopantetheine is transferred from CoA to a specific serine of the apo-ACP-like protein.

Its pathway is antibiotic biosynthesis; oxytetracycline biosynthesis. Functionally, acyl carrier protein. The sequence is that of Oxytetracycline polyketide synthase acyl carrier protein from Streptomyces rimosus.